Here is a 512-residue protein sequence, read N- to C-terminus: GMP synthase [glutamine-hydrolyzing] (512 aa).

Residues 7-197 (TIIVLDFGSQ…VFGVCGCSEG (191 aa)) enclose the Glutamine amidotransferase type-1 domain. Cysteine 84 (nucleophile) is an active-site residue. Residues histidine 171 and glutamate 173 contribute to the active site. In terms of domain architecture, GMPS ATP-PPase spans 198-387 (WNMENFIEVE…LGIPDEIVWR (190 aa)). 225–231 (SGGVDSS) provides a ligand contact to ATP.

As to quaternary structure, homodimer.

It carries out the reaction XMP + L-glutamine + ATP + H2O = GMP + L-glutamate + AMP + diphosphate + 2 H(+). Its pathway is purine metabolism; GMP biosynthesis; GMP from XMP (L-Gln route): step 1/1. Catalyzes the synthesis of GMP from XMP. The chain is GMP synthase [glutamine-hydrolyzing] from Bacillus mycoides (strain KBAB4) (Bacillus weihenstephanensis).